The primary structure comprises 403 residues: MIPPSGAREDGVDGLPKETASAEQPPSPASTGSQESKLQKLKRSLSFKTKSLRSKSADNFFQRTNSDVKLQADVLAGVSPGSSPLPAPGSLTCTPTRAGLYPGGGGKAHAFQEHIFKKPTFCDVCNHMIVGTNAKHGLRCKACKMSIHHKCMDGLAPQRCMGKLPKGFRRYYSSPLLIHEQFGCIKEVMPIACGNKVDPVYETLRFGTSLAQRTKKSSSGSGSDSPHRTSTSDLVEVPEEADGPGDGYDLRKRSNSVFTYPENGTDDFRDQAKNINHQGPLSKDPLQMNTYVALYKFVPQENEDLEMRPGDMITLLEDSNEDWWKGKIQDRIGFFPANFVQRVHQNEKIFRCVRTFSGCKEQGQITLKENQICVASEEEQDGFIRVLSGKKRGLVPLDVLENI.

The tract at residues 1-43 (MIPPSGAREDGVDGLPKETASAEQPPSPASTGSQESKLQKLKR) is disordered. Positions 21 to 36 (SAEQPPSPASTGSQES) are enriched in polar residues. A Phorbol-ester/DAG-type zinc finger spans residues 108–160 (AHAFQEHIFKKPTFCDVCNHMIVGTNAKHGLRCKACKMSIHHKCMDGLAPQRC). The tract at residues 212–253 (QRTKKSSSGSGSDSPHRTSTSDLVEVPEEADGPGDGYDLRKR) is disordered. 2 consecutive SH3 domains span residues 286 to 345 (LQMN…RVHQ) and 348 to 403 (KIFR…LENI).

Interacts (via SH3 domains) with CACNA1S. Interacts with CACNA1H. Interacts with CACNA1C.

It is found in the cytoplasm. The protein localises to the cytosol. It localises to the cell membrane. The protein resides in the sarcolemma. Its function is as follows. Promotes expression of the ion channel CACNA1H at the cell membrane, and thereby contributes to the regulation of channel activity. Plays a minor and redundant role in promoting the expression of calcium channel CACNA1S at the cell membrane, and thereby contributes to increased channel activity. Slows down the inactivation rate of the calcium channel CACNA1C. In Bos taurus (Bovine), this protein is SH3 and cysteine-rich domain-containing protein (STAC).